A 598-amino-acid chain; its full sequence is mRNA-capping enzyme (598 aa).

Residues Met1–Pro215 are TPase. Positions Leu25 to Ala183 constitute a Tyrosine-protein phosphatase domain. The active-site Phosphocysteine intermediate is Cys126. The disordered stretch occupies residues Ala186–Lys227. Acidic residues predominate over residues Cys193 to Gly206. Low complexity predominate over residues Ser207–Ser218. The GTase stretch occupies residues Gly233–Gln598. The active-site N6-GMP-lysine intermediate is the Lys298. GTP contacts are provided by residues Arg303, Arg319, Asp347–Glu349, Lys462–Lys464, and Arg532–Lys537. Residues Arg575–Gln598 form a disordered region.

In the N-terminal section; belongs to the non-receptor class of the protein-tyrosine phosphatase family. The protein in the C-terminal section; belongs to the eukaryotic GTase family.

It localises to the nucleus. The enzyme catalyses a 5'-end triphospho-ribonucleoside in mRNA + H2O = a 5'-end diphospho-ribonucleoside in mRNA + phosphate + H(+). It catalyses the reaction a 5'-end diphospho-ribonucleoside in mRNA + GTP + H(+) = a 5'-end (5'-triphosphoguanosine)-ribonucleoside in mRNA + diphosphate. In terms of biological role, bifunctional mRNA-capping enzyme exhibiting RNA 5'-triphosphate monophosphatase activity in the N-terminal part and mRNA guanylyltransferase activity in the C-terminal part. Catalyzes the first two steps of cap formation: by removing the gamma-phosphate from the 5'-triphosphate end of nascent mRNA to yield a diphosphate end, and by transferring the GMP moiety of GTP to the 5'-diphosphate terminus of RNA via a covalent enzyme-GMP reaction intermediate. In Danio rerio (Zebrafish), this protein is mRNA-capping enzyme (rngtt).